The chain runs to 117 residues: Large ribosomal subunit protein bL20c (117 aa).

The protein belongs to the bacterial ribosomal protein bL20 family.

It is found in the plastid. The protein resides in the chloroplast. Binds directly to 23S ribosomal RNA and is necessary for the in vitro assembly process of the 50S ribosomal subunit. It is not involved in the protein synthesizing functions of that subunit. This chain is Large ribosomal subunit protein bL20c, found in Aethionema grandiflorum (Persian stone-cress).